The primary structure comprises 171 residues: Tetratricopeptide repeat protein 9C (171 aa).

TPR repeat units lie at residues 8–41, 72–107, and 108–141; these read AQLY…LRGL, TDCY…QPDN, and AKAL…KPKD.

This sequence belongs to the TTC9 family.

The polypeptide is Tetratricopeptide repeat protein 9C (TTC9C) (Bos taurus (Bovine)).